We begin with the raw amino-acid sequence, 74 residues long: Putative membrane protein insertion efficiency factor (74 aa).

Belongs to the UPF0161 family.

Its subcellular location is the cell inner membrane. Could be involved in insertion of integral membrane proteins into the membrane. This is Putative membrane protein insertion efficiency factor from Endomicrobium trichonymphae.